A 137-amino-acid chain; its full sequence is Large ribosomal subunit protein uL16c (137 aa).

Basic residues predominate over residues Met1 to Met17. The interval Met1 to Ser21 is disordered.

This sequence belongs to the universal ribosomal protein uL16 family. As to quaternary structure, part of the 50S ribosomal subunit.

Its subcellular location is the plastid. The sequence is that of Large ribosomal subunit protein uL16c from Cuscuta obtusiflora (Peruvian dodder).